The primary structure comprises 387 residues: Anhydro-N-acetylmuramic acid kinase (387 aa).

An ATP-binding site is contributed by 17-24 (GTSMDGVD).

The protein belongs to the anhydro-N-acetylmuramic acid kinase family.

It catalyses the reaction 1,6-anhydro-N-acetyl-beta-muramate + ATP + H2O = N-acetyl-D-muramate 6-phosphate + ADP + H(+). Its pathway is amino-sugar metabolism; 1,6-anhydro-N-acetylmuramate degradation. It functions in the pathway cell wall biogenesis; peptidoglycan recycling. Functionally, catalyzes the specific phosphorylation of 1,6-anhydro-N-acetylmuramic acid (anhMurNAc) with the simultaneous cleavage of the 1,6-anhydro ring, generating MurNAc-6-P. Is required for the utilization of anhMurNAc either imported from the medium or derived from its own cell wall murein, and thus plays a role in cell wall recycling. This chain is Anhydro-N-acetylmuramic acid kinase, found in Burkholderia mallei (strain ATCC 23344).